The chain runs to 418 residues: UDP-N-acetylglucosamine 1-carboxyvinyltransferase (418 aa).

23–24 (KN) contacts phosphoenolpyruvate. Position 93 (arginine 93) interacts with UDP-N-acetyl-alpha-D-glucosamine. Catalysis depends on aspartate 117, which acts as the Proton donor. UDP-N-acetyl-alpha-D-glucosamine-binding residues include aspartate 305 and valine 327.

Belongs to the EPSP synthase family. MurA subfamily.

The protein localises to the cytoplasm. The catalysed reaction is phosphoenolpyruvate + UDP-N-acetyl-alpha-D-glucosamine = UDP-N-acetyl-3-O-(1-carboxyvinyl)-alpha-D-glucosamine + phosphate. The protein operates within cell wall biogenesis; peptidoglycan biosynthesis. Functionally, cell wall formation. Adds enolpyruvyl to UDP-N-acetylglucosamine. The polypeptide is UDP-N-acetylglucosamine 1-carboxyvinyltransferase (Mycobacterium bovis (strain ATCC BAA-935 / AF2122/97)).